We begin with the raw amino-acid sequence, 387 residues long: MKTVSIFGSTGAIGQMIIDVILASSDSYQVKALVAKSNVQLLAFQAKVVNAEMVVIADVGLYKELKDLLFGTNVKISVGDVGMQMAASLNVDYVMMAIVGIAALVPMVYLISAGVKVIALANKESVVCGGTLLFNLAREKNVNIIPVDSEHNAIFQILHSNDRENIDKITITGSGGALLYMDHDQMRNITVQETIKHPVWKMGKKISIDSATMVNKSLEIIEAYHLFSVKSEKLDVIIHPEAIVHGIVSYVDGACIAFMSVPDMKISIMYTLSWPNRMSMLYKKLNLASYHQLTFMKPDINKFPGIRLGFEILRTSNIHANSIIFNTANEVAVDAFLNRKIGFLDIVNVIYSTLDMVDCLHINSLSDILECDSIARRVASDIICKLN.

5 residues coordinate NADPH: Thr10, Gly11, Ile13, Asn38, and Asn122. Lys123 provides a ligand contact to 1-deoxy-D-xylulose 5-phosphate. NADPH is bound at residue Glu124. Asp148 contacts Mn(2+). Positions 149, 150, 174, and 197 each coordinate 1-deoxy-D-xylulose 5-phosphate. Mn(2+) is bound at residue Glu150. Gly203 contacts NADPH. Residues Ser210, Asn215, Lys216, and Glu219 each contribute to the 1-deoxy-D-xylulose 5-phosphate site. Glu219 lines the Mn(2+) pocket.

It belongs to the DXR family. The cofactor is Mg(2+). Mn(2+) serves as cofactor.

The enzyme catalyses 2-C-methyl-D-erythritol 4-phosphate + NADP(+) = 1-deoxy-D-xylulose 5-phosphate + NADPH + H(+). It participates in isoprenoid biosynthesis; isopentenyl diphosphate biosynthesis via DXP pathway; isopentenyl diphosphate from 1-deoxy-D-xylulose 5-phosphate: step 1/6. In terms of biological role, catalyzes the NADPH-dependent rearrangement and reduction of 1-deoxy-D-xylulose-5-phosphate (DXP) to 2-C-methyl-D-erythritol 4-phosphate (MEP). The sequence is that of 1-deoxy-D-xylulose 5-phosphate reductoisomerase from Ehrlichia ruminantium (strain Gardel).